A 458-amino-acid polypeptide reads, in one-letter code: Elongation factor 1-alpha (458 aa).

Residue glycine 2 is modified to N,N,N-trimethylglycine. N6,N6-dimethyllysine; alternate is present on lysine 3. Lysine 3 carries the N6-methyllysine; alternate modification. Positions 5–240 constitute a tr-type G domain; the sequence is KTHVNVVVIG…DAIDPPQRPS (236 aa). The G1 stretch occupies residues 14-21; it reads GHVDSGKS. Residue 14–21 coordinates GTP; that stretch reads GHVDSGKS. Lysine 30 is modified (N6-methyllysine). The tract at residues 70-74 is G2; that stretch reads GITID. Lysine 79 is subject to N6,N6,N6-trimethyllysine. The segment at 91–94 is G3; sequence DAPG. GTP is bound by residues 91–95 and 153–156; these read DAPGH and NKMD. The tract at residues 153-156 is G4; it reads NKMD. Positions 192–194 are G5; the sequence is SGW. At lysine 316 the chain carries N6,N6-dimethyllysine; alternate. Lysine 316 bears the N6-methyllysine; alternate mark. Lysine 390 carries the post-translational modification N6-methyllysine.

This sequence belongs to the TRAFAC class translation factor GTPase superfamily. Classic translation factor GTPase family. EF-Tu/EF-1A subfamily.

It is found in the cytoplasm. Its function is as follows. This protein promotes the GTP-dependent binding of aminoacyl-tRNA to the A-site of ribosomes during protein biosynthesis. The protein is Elongation factor 1-alpha (TEF-1) of Absidia glauca (Pin mould).